The chain runs to 120 residues: Ribonuclease P protein component (120 aa).

Belongs to the RnpA family. As to quaternary structure, consists of a catalytic RNA component (M1 or rnpB) and a protein subunit.

The enzyme catalyses Endonucleolytic cleavage of RNA, removing 5'-extranucleotides from tRNA precursor.. Its function is as follows. RNaseP catalyzes the removal of the 5'-leader sequence from pre-tRNA to produce the mature 5'-terminus. It can also cleave other RNA substrates such as 4.5S RNA. The protein component plays an auxiliary but essential role in vivo by binding to the 5'-leader sequence and broadening the substrate specificity of the ribozyme. The sequence is that of Ribonuclease P protein component from Pseudoalteromonas atlantica (strain T6c / ATCC BAA-1087).